The chain runs to 268 residues: Adenosylcobinamide-GDP ribazoletransferase (268 aa).

The next 6 helical transmembrane spans lie at 54 to 74 (IAGL…GVLW), 80 to 100 (AVVL…DGLS), 124 to 144 (IGVM…AFLA), 150 to 170 (WLTA…YGIV), 202 to 222 (ALAL…VWMV), and 243 to 263 (GALC…SAPM).

It belongs to the CobS family. The cofactor is Mg(2+).

It localises to the cell membrane. It carries out the reaction alpha-ribazole + adenosylcob(III)inamide-GDP = adenosylcob(III)alamin + GMP + H(+). The enzyme catalyses alpha-ribazole 5'-phosphate + adenosylcob(III)inamide-GDP = adenosylcob(III)alamin 5'-phosphate + GMP + H(+). The protein operates within cofactor biosynthesis; adenosylcobalamin biosynthesis; adenosylcobalamin from cob(II)yrinate a,c-diamide: step 7/7. Its function is as follows. Joins adenosylcobinamide-GDP and alpha-ribazole to generate adenosylcobalamin (Ado-cobalamin). Also synthesizes adenosylcobalamin 5'-phosphate from adenosylcobinamide-GDP and alpha-ribazole 5'-phosphate. The polypeptide is Adenosylcobinamide-GDP ribazoletransferase (Roseiflexus sp. (strain RS-1)).